A 101-amino-acid polypeptide reads, in one-letter code: Small ribosomal subunit protein bS18c (101 aa).

Belongs to the bacterial ribosomal protein bS18 family. In terms of assembly, part of the 30S ribosomal subunit.

The protein resides in the plastid. It localises to the chloroplast. This chain is Small ribosomal subunit protein bS18c, found in Morus indica (Mulberry).